The primary structure comprises 208 residues: MFVSTAFAQTATESQPASTAGEHGAADAVHTETGVAHDAGHGSGVFPPFDSTHYASQVLWLAITFGLFYLFLSRVVLPRIGGVIETRRDRIAQDLEQAARLKQDADNAIAAYEQELAQARSKAASIAEAAREKGKGEADAERASAEAVLESKLKEAEERIAAIKAKAMSDVGNIAEETTATIVEQLLGLTADKASVSEAVKAIRASNA.

Positions 1–18 (MFVSTAFAQTATESQPAS) are enriched in polar residues. The interval 1 to 26 (MFVSTAFAQTATESQPASTAGEHGAA) is disordered. A helical transmembrane segment spans residues 56–78 (SQVLWLAITFGLFYLFLSRVVLP).

The protein belongs to the ATPase B chain family. In terms of assembly, F-type ATPases have 2 components, F(1) - the catalytic core - and F(0) - the membrane proton channel. F(1) has five subunits: alpha(3), beta(3), gamma(1), delta(1), epsilon(1). F(0) has three main subunits: a(1), b(2) and c(10-14). The alpha and beta chains form an alternating ring which encloses part of the gamma chain. F(1) is attached to F(0) by a central stalk formed by the gamma and epsilon chains, while a peripheral stalk is formed by the delta and b chains.

Its subcellular location is the cell inner membrane. Functionally, f(1)F(0) ATP synthase produces ATP from ADP in the presence of a proton or sodium gradient. F-type ATPases consist of two structural domains, F(1) containing the extramembraneous catalytic core and F(0) containing the membrane proton channel, linked together by a central stalk and a peripheral stalk. During catalysis, ATP synthesis in the catalytic domain of F(1) is coupled via a rotary mechanism of the central stalk subunits to proton translocation. In terms of biological role, component of the F(0) channel, it forms part of the peripheral stalk, linking F(1) to F(0). This Brucella abortus (strain 2308) protein is ATP synthase subunit b 1.